Here is a 456-residue protein sequence, read N- to C-terminus: MKLWGGRFEKDTDREMRDFHASIHFDWRLYEEDIRGSIAHVTMLARQGIITNEEKEKIIGALTEILEEIKAGKVDFSPEAEDIHLNIETLLIKKIGDVGKKVHTGRSRNDQVALDTRLYVKKEGTAIIALIKELQETLINLAEGHLNTIMPGYTHLQRAQPVTLAHHLLAYFWMFDRDRSRFYDCLKRADRSPLGAGALAGTTLPLDREFVSELLGFNGVCENSLDAVSDRDYILEFLFAAATTMMHLSRFSEEIVLWNSKEFSFVEIDDRYATGSSMMPQKKNPDAAELIRGKTGRVYGNLMAVLTMMKGLPLAYNKDMQEDKEPLFDTVDTLKGSLRVFTGMLKTIKFNQGAMYKAALKGFLNATDLAEYLVEKGVPFREAHRITGELVLKAEKTGRELLELSLDELKEMSPLIEEDIYEKLKIENVLAKRKLFGGPAPQAVIEQLRQAREALA.

This sequence belongs to the lyase 1 family. Argininosuccinate lyase subfamily.

The protein localises to the cytoplasm. It carries out the reaction 2-(N(omega)-L-arginino)succinate = fumarate + L-arginine. Its pathway is amino-acid biosynthesis; L-arginine biosynthesis; L-arginine from L-ornithine and carbamoyl phosphate: step 3/3. In Carboxydothermus hydrogenoformans (strain ATCC BAA-161 / DSM 6008 / Z-2901), this protein is Argininosuccinate lyase.